A 91-amino-acid chain; its full sequence is Molybdopterin synthase sulfur carrier subunit (91 aa).

1-thioglycine; alternate is present on Gly91. Gly91 carries the post-translational modification Glycyl adenylate; alternate.

It belongs to the MoaD family. MOCS2A subfamily. Heterotetramer; composed of 2 small (MOCS2A) and 2 large (MOCS2B) subunits. C-terminal thiocarboxylation occurs in 2 steps, it is first acyl-adenylated (-COAMP) via the hesA/moeB/thiF part of uba4, then thiocarboxylated (-COSH) via the rhodanese domain of uba4.

It localises to the cytoplasm. It functions in the pathway cofactor biosynthesis; molybdopterin biosynthesis. Its function is as follows. Acts as a sulfur carrier required for molybdopterin biosynthesis. Component of the molybdopterin synthase complex that catalyzes the conversion of precursor Z into molybdopterin by mediating the incorporation of 2 sulfur atoms into precursor Z to generate a dithiolene group. In the complex, serves as sulfur donor by being thiocarboxylated (-COSH) at its C-terminus by uba4. After interaction with MOCS2B, the sulfur is then transferred to precursor Z to form molybdopterin. The sequence is that of Molybdopterin synthase sulfur carrier subunit from Emericella nidulans (strain FGSC A4 / ATCC 38163 / CBS 112.46 / NRRL 194 / M139) (Aspergillus nidulans).